The chain runs to 899 residues: Bifunctional uridylyltransferase/uridylyl-removing enzyme (899 aa).

The tract at residues 1-347 (MFISDPTDSL…PESERPEKSV (347 aa)) is uridylyltransferase. The uridylyl-removing stretch occupies residues 348-718 (LNARFNRVGD…EHRELALDAV (371 aa)). The 117-residue stretch at 465–581 (VDAHILLLIR…TKFANLVGNV (117 aa)) folds into the HD domain. ACT domains are found at residues 719–804 (QIFI…RLPR) and 827–899 (VMSL…TPSC).

It belongs to the GlnD family. Mg(2+) is required as a cofactor.

It carries out the reaction [protein-PII]-L-tyrosine + UTP = [protein-PII]-uridylyl-L-tyrosine + diphosphate. It catalyses the reaction [protein-PII]-uridylyl-L-tyrosine + H2O = [protein-PII]-L-tyrosine + UMP + H(+). With respect to regulation, uridylyltransferase (UTase) activity is inhibited by glutamine, while glutamine activates uridylyl-removing (UR) activity. Its function is as follows. Modifies, by uridylylation and deuridylylation, the PII regulatory proteins (GlnB and homologs), in response to the nitrogen status of the cell that GlnD senses through the glutamine level. Under low glutamine levels, catalyzes the conversion of the PII proteins and UTP to PII-UMP and PPi, while under higher glutamine levels, GlnD hydrolyzes PII-UMP to PII and UMP (deuridylylation). Thus, controls uridylylation state and activity of the PII proteins, and plays an important role in the regulation of nitrogen assimilation and metabolism. This is Bifunctional uridylyltransferase/uridylyl-removing enzyme from Psychrobacter sp. (strain PRwf-1).